We begin with the raw amino-acid sequence, 101 residues long: Small ribosomal subunit protein uS14 (101 aa).

It belongs to the universal ribosomal protein uS14 family. As to quaternary structure, part of the 30S ribosomal subunit. Contacts proteins S3 and S10.

Binds 16S rRNA, required for the assembly of 30S particles and may also be responsible for determining the conformation of the 16S rRNA at the A site. The protein is Small ribosomal subunit protein uS14 of Acinetobacter baumannii (strain SDF).